The sequence spans 109 residues: Large ribosomal subunit protein uL24 (109 aa).

It belongs to the universal ribosomal protein uL24 family. In terms of assembly, part of the 50S ribosomal subunit.

Its function is as follows. One of two assembly initiator proteins, it binds directly to the 5'-end of the 23S rRNA, where it nucleates assembly of the 50S subunit. In terms of biological role, one of the proteins that surrounds the polypeptide exit tunnel on the outside of the subunit. This Syntrophotalea carbinolica (strain DSM 2380 / NBRC 103641 / GraBd1) (Pelobacter carbinolicus) protein is Large ribosomal subunit protein uL24.